Reading from the N-terminus, the 290-residue chain is Signal recognition particle receptor FtsY (290 aa).

GTP-binding positions include 91–98, 173–177, and 237–240; these read GTNGSGKT, DTSGR, and TKVD.

It belongs to the GTP-binding SRP family. FtsY subfamily. As to quaternary structure, part of the signal recognition particle protein translocation system, which is composed of SRP and FtsY.

The protein localises to the cell inner membrane. The protein resides in the cytoplasm. It catalyses the reaction GTP + H2O = GDP + phosphate + H(+). In terms of biological role, involved in targeting and insertion of nascent membrane proteins into the cytoplasmic membrane. Acts as a receptor for the complex formed by the signal recognition particle (SRP) and the ribosome-nascent chain (RNC). The polypeptide is Signal recognition particle receptor FtsY (Chlamydia pneumoniae (Chlamydophila pneumoniae)).